Here is a 537-residue protein sequence, read N- to C-terminus: CTP synthase (537 aa).

The amidoligase domain stretch occupies residues M1 to L268. Residue S14 coordinates CTP. S14 contacts UTP. S15 to L20 contacts ATP. L-glutamine is bound at residue Y55. Position 72 (D72) interacts with ATP. Mg(2+)-binding residues include D72 and E142. Residues D149–E151, K188–Q193, and K224 contribute to the CTP site. UTP contacts are provided by residues K188–Q193 and K224. Positions R294–N533 constitute a Glutamine amidotransferase type-1 domain. G353 is an L-glutamine binding site. C380 serves as the catalytic Nucleophile; for glutamine hydrolysis. L-glutamine contacts are provided by residues L381–Q384, E404, and R461. Residues H506 and E508 contribute to the active site.

The protein belongs to the CTP synthase family. Homotetramer.

The enzyme catalyses UTP + L-glutamine + ATP + H2O = CTP + L-glutamate + ADP + phosphate + 2 H(+). The catalysed reaction is L-glutamine + H2O = L-glutamate + NH4(+). It carries out the reaction UTP + NH4(+) + ATP = CTP + ADP + phosphate + 2 H(+). Its pathway is pyrimidine metabolism; CTP biosynthesis via de novo pathway; CTP from UDP: step 2/2. Allosterically activated by GTP, when glutamine is the substrate; GTP has no effect on the reaction when ammonia is the substrate. The allosteric effector GTP functions by stabilizing the protein conformation that binds the tetrahedral intermediate(s) formed during glutamine hydrolysis. Inhibited by the product CTP, via allosteric rather than competitive inhibition. Functionally, catalyzes the ATP-dependent amination of UTP to CTP with either L-glutamine or ammonia as the source of nitrogen. Regulates intracellular CTP levels through interactions with the four ribonucleotide triphosphates. In Chlamydia caviae (strain ATCC VR-813 / DSM 19441 / 03DC25 / GPIC) (Chlamydophila caviae), this protein is CTP synthase.